A 91-amino-acid chain; its full sequence is Probable Fe(2+)-trafficking protein (91 aa).

Belongs to the Fe(2+)-trafficking protein family.

Its function is as follows. Could be a mediator in iron transactions between iron acquisition and iron-requiring processes, such as synthesis and/or repair of Fe-S clusters in biosynthetic enzymes. The polypeptide is Probable Fe(2+)-trafficking protein (Ralstonia pickettii (strain 12J)).